A 262-amino-acid polypeptide reads, in one-letter code: Phosphate import ATP-binding protein PstB (262 aa).

Residues 16 to 257 form the ABC transporter domain; that stretch reads MEARHLSVRY…PSEQRTEDYV (242 aa). 48–55 serves as a coordination point for ATP; it reads GPSGCGKS.

It belongs to the ABC transporter superfamily. Phosphate importer (TC 3.A.1.7) family. In terms of assembly, the complex is composed of two ATP-binding proteins (PstB), two transmembrane proteins (PstC and PstA) and a solute-binding protein (PstS).

It localises to the cell inner membrane. It carries out the reaction phosphate(out) + ATP + H2O = ADP + 2 phosphate(in) + H(+). In terms of biological role, part of the ABC transporter complex PstSACB involved in phosphate import. Responsible for energy coupling to the transport system. This Anaeromyxobacter dehalogenans (strain 2CP-C) protein is Phosphate import ATP-binding protein PstB.